The sequence spans 631 residues: Chaperone protein DnaK (631 aa).

T197 carries the phosphothreonine; by autocatalysis modification. The segment at 598 to 631 (MYKKEQGQTGGTEQGGTEQKKSGGDDDVIDAEVE) is disordered. Over residues 622–631 (DDDVIDAEVE) the composition is skewed to acidic residues.

Belongs to the heat shock protein 70 family.

In terms of biological role, acts as a chaperone. This chain is Chaperone protein DnaK, found in Nitratiruptor sp. (strain SB155-2).